The following is a 179-amino-acid chain: Inorganic pyrophosphatase (179 aa).

Lysine 30, arginine 44, and tyrosine 56 together coordinate substrate. Mg(2+) contacts are provided by aspartate 66, aspartate 71, and aspartate 103. Residue tyrosine 142 coordinates substrate.

Belongs to the PPase family. Homohexamer. Mg(2+) is required as a cofactor.

Its subcellular location is the cytoplasm. The catalysed reaction is diphosphate + H2O = 2 phosphate + H(+). Its function is as follows. Catalyzes the hydrolysis of inorganic pyrophosphate (PPi) forming two phosphate ions. This chain is Inorganic pyrophosphatase, found in Rhodospirillum rubrum (strain ATCC 11170 / ATH 1.1.1 / DSM 467 / LMG 4362 / NCIMB 8255 / S1).